Consider the following 335-residue polypeptide: Protein-arginine kinase (335 aa).

The 224-residue stretch at 21–244 (VIISSRIRLA…NQIINEEKQI (224 aa)) folds into the Phosphagen kinase C-terminal domain. ATP contacts are provided by residues 24–28 (SSRIR), His82, Arg115, 166–170 (RASVM), and 197–202 (RGIYGE).

It belongs to the ATP:guanido phosphotransferase family.

It catalyses the reaction L-arginyl-[protein] + ATP = N(omega)-phospho-L-arginyl-[protein] + ADP + H(+). Its function is as follows. Catalyzes the specific phosphorylation of arginine residues in proteins. The protein is Protein-arginine kinase of Staphylococcus epidermidis (strain ATCC 12228 / FDA PCI 1200).